The following is a 246-amino-acid chain: Small ribosomal subunit protein uS2 (246 aa).

The protein belongs to the universal ribosomal protein uS2 family.

The protein is Small ribosomal subunit protein uS2 of Dictyoglomus thermophilum (strain ATCC 35947 / DSM 3960 / H-6-12).